The chain runs to 88 residues: Small ribosomal subunit protein uS17 (88 aa).

This sequence belongs to the universal ribosomal protein uS17 family. As to quaternary structure, part of the 30S ribosomal subunit.

Its function is as follows. One of the primary rRNA binding proteins, it binds specifically to the 5'-end of 16S ribosomal RNA. The sequence is that of Small ribosomal subunit protein uS17 from Prochlorococcus marinus (strain SARG / CCMP1375 / SS120).